The following is a 311-amino-acid chain: Dihydroorotate dehydrogenase B (NAD(+)), catalytic subunit (311 aa).

FMN is bound by residues S24 and 48-49; that span reads KA. Substrate contacts are provided by residues K48 and 72–76; that span reads NAIGL. 2 residues coordinate FMN: N104 and N132. A substrate-binding site is contributed by N132. Residue C135 is the Nucleophile of the active site. Positions 170 and 196 each coordinate FMN. 197 to 198 contacts substrate; sequence NT. FMN-binding positions include G222, 248-249, and 270-271; these read GG and GT.

Belongs to the dihydroorotate dehydrogenase family. Type 1 subfamily. As to quaternary structure, heterotetramer of 2 PyrK and 2 PyrD type B subunits. It depends on FMN as a cofactor.

It is found in the cytoplasm. The catalysed reaction is (S)-dihydroorotate + NAD(+) = orotate + NADH + H(+). Its pathway is pyrimidine metabolism; UMP biosynthesis via de novo pathway; orotate from (S)-dihydroorotate (NAD(+) route): step 1/1. Its function is as follows. Catalyzes the conversion of dihydroorotate to orotate with NAD(+) as electron acceptor. The chain is Dihydroorotate dehydrogenase B (NAD(+)), catalytic subunit (pyrDB) from Lactococcus lactis subsp. lactis (strain IL1403) (Streptococcus lactis).